The sequence spans 105 residues: Protein S100-A11 (105 aa).

Met1 carries the N-acetylmethionine modification. Ala2 is modified (N-acetylalanine; in Protein S100-A11, N-terminally processed). Lys3 carries the N6-acetyllysine modification. Residues Ser5 and Ser6 each carry the phosphoserine modification. Thr10 is modified (phosphothreonine). EF-hand domains follow at residues 13–49 (CIES…ELAA) and 55–90 (KDPG…LAMA). Lys27 is modified (N6-acetyllysine). 7 residues coordinate Ca(2+): Thr33, Glu38, Asp68, Asn70, Asp72, Gln74, and Glu79.

Belongs to the S-100 family. Homodimer; disulfide-linked. Post-translationally, phosphorylation at Thr-10 by PRKCA significantly suppresses homodimerization and promotes association with NCL/nucleolin which induces nuclear translocation.

The protein resides in the cytoplasm. It is found in the nucleus. Its function is as follows. Facilitates the differentiation and the cornification of keratinocytes. This is Protein S100-A11 (S100A11) from Homo sapiens (Human).